The following is a 249-amino-acid chain: Proteasome subunit alpha type-3 (249 aa).

Ser-2 is subject to N-acetylserine. 2 positions are modified to O-acetylserine: Ser-214 and Ser-220. Lys-221 is covalently cross-linked (Glycyl lysine isopeptide (Lys-Gly) (interchain with G-Cter in ubiquitin)).

The protein belongs to the peptidase T1A family. In terms of assembly, component of the 20S core complex of the 26S proteasome. The 26S proteasome is composed of a core protease (CP), known as the 20S proteasome, capped at one or both ends by the 19S regulatory particle (RP/PA700). The 20S proteasome core is composed of 28 subunits that are arranged in four stacked rings, resulting in a barrel-shaped structure. The two end rings are each formed by seven alpha subunits, and the two central rings are each formed by seven beta subunits. The catalytic chamber with the active sites is on the inside of the barrel. Ubiquitous low levels.

It localises to the cytoplasm. It is found in the nucleus. Functionally, the proteasome is a multicatalytic proteinase complex which is characterized by its ability to cleave peptides with Arg, Phe, Tyr, Leu, and Glu adjacent to the leaving group at neutral or slightly basic pH. The proteasome has an ATP-dependent proteolytic activity. The chain is Proteasome subunit alpha type-3 (PAG1) from Arabidopsis thaliana (Mouse-ear cress).